Here is a 625-residue protein sequence, read N- to C-terminus: MISSVCVSSYRGRKSGNKPPSKTCLKEEMAKGEASEKIIINVGGTRHETYRSTLRTLPGTRLAWLADPDGGGRPESDGGGAGSSGSSGGGGGCEFFFDRHPGVFAYVLNYYRTGKLHCPADVCGPLFEEELTFWGIDETDVEPCCWMTYRQHRDAEEALDIFESPDGGGGGAGPGDEAGDDERELALQRLGPHEGGSGPGAGSGGCRGWQPRMWALFEDPYSSRAARVVAFASLFFILVSITTFCLETHEAFNIDRNVTEIHRVGNITSVRFRREVETEPILTYIEGVCVMWFTLEFLVRIVCCPDTLDFVKNLLNIIDFVAILPFYLEVGLSGLSSKAARDVLGFLRVVRFVRILRIFKLTRHFVGLRVLGHTLRASTNEFLLLIIFLALGVLIFATMIYYAERIGARPSDPRGNDHTDFKNIPIGFWWAVVTMTTLGYGDMYPKTWSGMLVGALCALAGVLTIAMPVPVIVNNFGMYYSLAMAKQKLPKKRKKHVPRPPQLESPIYCKSEETSPRDSTYSDTSPPAREEGMVERKRADSKQNGDANAVLSDEEGAGLTQPLASAPTPEERRALRRSGTRDRNKKAAACFLLSAGDYACADGSVQKEGSVEPKACVPVSHTCAL.

Disordered stretches follow at residues 1-24 (MISS…SKTC) and 65-86 (LADP…SSGS). The tract at residues 1 to 28 (MISSVCVSSYRGRKSGNKPPSKTCLKEE) is inactivation gate. Residues 1-227 (MISSVCVSSY…EDPYSSRAAR (227 aa)) are Cytoplasmic-facing. Residues Ser8, Ser9, Ser15, and Ser21 each carry the phosphoserine modification. Residues 77-86 (DGGGAGSSGS) are compositionally biased toward gly residues. The Zn(2+) site is built by His117, Cys123, Cys144, and Cys145. A helical membrane pass occupies residues 228–248 (VVAFASLFFILVSITTFCLET). N-linked (GlcNAc...) asparagine glycosylation is found at Asn257 and Asn266. A helical membrane pass occupies residues 279 to 299 (EPILTYIEGVCVMWFTLEFLV). Residues 300-313 (RIVCCPDTLDFVKN) are Cytoplasmic-facing. The helical transmembrane segment at 314-334 (LLNIIDFVAILPFYLEVGLSG) threads the bilayer. A helical; Voltage-sensor transmembrane segment spans residues 346 to 365 (FLRVVRFVRILRIFKLTRHF). Residues 366–381 (VGLRVLGHTLRASTNE) lie on the Cytoplasmic side of the membrane. Residues 382–402 (FLLLIIFLALGVLIFATMIYY) form a helical membrane-spanning segment. Positions 437, 438, 439, and 440 each coordinate K(+). The Selectivity filter motif lies at 437-442 (TLGYGD). Residues 453–473 (VGALCALAGVLTIAMPVPVIV) traverse the membrane as a helical segment. Topologically, residues 474 to 625 (NNFGMYYSLA…CVPVSHTCAL (152 aa)) are cytoplasmic. The tract at residues 490-581 (PKKRKKHVPR…RRALRRSGTR (92 aa)) is disordered. Positions 528–543 (AREEGMVERKRADSKQ) are enriched in basic and acidic residues.

It belongs to the potassium channel family. C (Shaw) (TC 1.A.1.2) subfamily. Kv3.4/KCNC4 sub-subfamily. Homotetramer. Heterotetramer of potassium channel proteins. Phosphorylation of serine residues in the inactivation gate inhibits rapid channel closure.

The protein resides in the membrane. The catalysed reaction is K(+)(in) = K(+)(out). Functionally, voltage-gated potassium channel that opens in response to the voltage difference across the membrane, forming a potassium-selective channel through which potassium ions pass in accordance with their electrochemical gradient. The channel displays rapid activation and inactivation kinetics. In Rattus norvegicus (Rat), this protein is Voltage-gated potassium channel KCNC4.